The primary structure comprises 358 residues: Peptide chain release factor 1 (358 aa).

Q236 is modified (N5-methylglutamine).

The protein belongs to the prokaryotic/mitochondrial release factor family. In terms of processing, methylated by PrmC. Methylation increases the termination efficiency of RF1.

It is found in the cytoplasm. In terms of biological role, peptide chain release factor 1 directs the termination of translation in response to the peptide chain termination codons UAG and UAA. This chain is Peptide chain release factor 1, found in Corynebacterium glutamicum (strain ATCC 13032 / DSM 20300 / JCM 1318 / BCRC 11384 / CCUG 27702 / LMG 3730 / NBRC 12168 / NCIMB 10025 / NRRL B-2784 / 534).